Reading from the N-terminus, the 193-residue chain is Ribonuclease HII (193 aa).

The 193-residue stretch at 1–193 (MTLGIDEAGR…SFALKNNWFS (193 aa)) folds into the RNase H type-2 domain. A divalent metal cation-binding residues include Asp-6, Glu-7, and Asp-103.

Belongs to the RNase HII family. Requires Mn(2+) as cofactor. It depends on Mg(2+) as a cofactor.

It is found in the cytoplasm. The enzyme catalyses Endonucleolytic cleavage to 5'-phosphomonoester.. Endonuclease that specifically degrades the RNA of RNA-DNA hybrids. The chain is Ribonuclease HII from Helicobacter acinonychis (strain Sheeba).